We begin with the raw amino-acid sequence, 341 residues long: L-threonine 3-dehydrogenase (341 aa).

Position 38 (Cys-38) interacts with Zn(2+). Residues Thr-40 and His-43 each act as charge relay system in the active site. The Zn(2+) site is built by His-63, Glu-64, Cys-93, Cys-96, Cys-99, and Cys-107. NAD(+)-binding positions include Ile-175, Asp-195, Arg-200, 262–264 (LGI), and 286–287 (IY).

It belongs to the zinc-containing alcohol dehydrogenase family. As to quaternary structure, homotetramer. The cofactor is Zn(2+).

Its subcellular location is the cytoplasm. It carries out the reaction L-threonine + NAD(+) = (2S)-2-amino-3-oxobutanoate + NADH + H(+). It functions in the pathway amino-acid degradation; L-threonine degradation via oxydo-reductase pathway; glycine from L-threonine: step 1/2. Its function is as follows. Catalyzes the NAD(+)-dependent oxidation of L-threonine to 2-amino-3-ketobutyrate. In Salmonella gallinarum (strain 287/91 / NCTC 13346), this protein is L-threonine 3-dehydrogenase.